We begin with the raw amino-acid sequence, 508 residues long: Photosystem II CP47 reaction center protein (508 aa).

6 consecutive transmembrane segments (helical) span residues 21-36, 101-115, 140-156, 203-218, 237-252, and 457-472; these read AVHI…WAGS, IVFS…IWHW, GIHL…FGAF, IAAG…FHLS, VLSS…AFVV, and SFAL…HGAR.

This sequence belongs to the PsbB/PsbC family. PsbB subfamily. PSII is composed of 1 copy each of membrane proteins PsbA, PsbB, PsbC, PsbD, PsbE, PsbF, PsbH, PsbI, PsbJ, PsbK, PsbL, PsbM, PsbT, PsbX, PsbY, PsbZ, Psb30/Ycf12, at least 3 peripheral proteins of the oxygen-evolving complex and a large number of cofactors. It forms dimeric complexes. Interacts with PAM68. Interacts with HHL1. Binds multiple chlorophylls. PSII binds additional chlorophylls, carotenoids and specific lipids. serves as cofactor.

It localises to the plastid. The protein localises to the chloroplast thylakoid membrane. In terms of biological role, one of the components of the core complex of photosystem II (PSII). It binds chlorophyll and helps catalyze the primary light-induced photochemical processes of PSII. PSII is a light-driven water:plastoquinone oxidoreductase, using light energy to abstract electrons from H(2)O, generating O(2) and a proton gradient subsequently used for ATP formation. In Arabidopsis thaliana (Mouse-ear cress), this protein is Photosystem II CP47 reaction center protein.